Consider the following 95-residue polypeptide: F(1)-ATPase inhibitor IF(1), mitochondrial (95 aa).

A mitochondrion-targeting transit peptide spans 1-25; it reads MLRTTVSKLARPTVSRAFATTSRAL. Disordered stretches follow at residues 20-48 and 76-95; these read TTSRALAGETGAPPKTGGPGDAFQRREKA and LKTLSDHIDEITREQGGERN.

The protein belongs to the ATPase inhibitor family. In terms of assembly, associates with the mitochondrial small ribosomal subunit (mt-SSU). IF(1) coiled-coil forms a helical bundle with the C-terminal extension of uS17m and also binds to mS27 in the mtSSU tail. Since the C-terminal extension of uS17m stabilizing the IF(1) on the mt-SSU is specific to N.crassa, IF(1) binding might also be specific.

It localises to the mitochondrion. In terms of biological role, endogenous F(1)F(0)-ATPase inhibitor limiting ATP depletion when the mitochondrial membrane potential falls below a threshold and the F(1)F(0)-ATP synthase starts hydrolyzing ATP to pump protons out of the mitochondrial matrix. Required to avoid the consumption of cellular ATP when the F(1)F(0)-ATP synthase enzyme acts as an ATP hydrolase. Functions through inserting its N-terminal part into the catalytically active F1-ATPase, thereby blocking its rotational movement and subsequently the ATP hydrolase activity. The protein is F(1)-ATPase inhibitor IF(1), mitochondrial (inh1) of Neurospora crassa (strain ATCC 24698 / 74-OR23-1A / CBS 708.71 / DSM 1257 / FGSC 987).